The chain runs to 273 residues: Photosystem I chlorophyll a/b-binding protein 3-1, chloroplastic (273 aa).

A chloroplast-targeting transit peptide spans 1 to 39; that stretch reads MAAQALVSSSLTSSVQTARQIFGSKPVASASQKKSSFVV. Position 56 (Trp56) interacts with chlorophyll b. Chlorophyll a is bound by residues Phe76, Ser82, and Glu100. Arg105 lines the chlorophyll b pocket. The chain crosses the membrane as a helical span at residues 106–126; that stretch reads FAMLGAAGAIAPEILGKAGLI. Ile140 contributes to the chlorophyll b binding site. Residues 146–166 form a helical membrane-spanning segment; that stretch reads YTYWADNYTLFVLEMALMGFA. Residues Glu167 and Arg170 each coordinate chlorophyll b. Ser195 is modified (phosphoserine). Residues Lys224, Glu225, Asn228, Arg230, Gln242, and His257 each contribute to the chlorophyll a site. A helical transmembrane segment spans residues 231-251; the sequence is LAMLAILGYFIQGLVTGVGPY. Phe272 is a chlorophyll b binding site.

Belongs to the light-harvesting chlorophyll a/b-binding (LHC) protein family. As to quaternary structure, the LHC complex consists of chlorophyll a-b binding proteins. Red-emitting heterodimer with LHCA2. Interacts with LHCA5. Binds to carotenoids. Binds at least 14 chlorophylls (8 Chl-a and 6 Chl-b) and carotenoids such as lutein and neoxanthin. serves as cofactor. In terms of processing, photoregulated by reversible phosphorylation of its threonine residues.

The protein resides in the plastid. It localises to the chloroplast thylakoid membrane. The light-harvesting complex (LHC) functions as a light receptor, it captures and delivers excitation energy to photosystems with which it is closely associated, here photosystem I. This Arabidopsis thaliana (Mouse-ear cress) protein is Photosystem I chlorophyll a/b-binding protein 3-1, chloroplastic.